A 33-amino-acid polypeptide reads, in one-letter code: Glutaminase-asparaginase (33 aa).

Positions 1 to 33 (NVVVLATGGTIAGAGTNAFASQXGPLGMVVEGK) constitute an Asparaginase/glutaminase domain. The active-site Acyl-ester intermediate is threonine 10.

The protein belongs to the asparaginase 1 family. In terms of assembly, homotetramer.

The protein resides in the periplasm. It catalyses the reaction L-glutamine + H2O = L-glutamate + NH4(+). It carries out the reaction L-asparagine + H2O = L-aspartate + NH4(+). The protein is Glutaminase-asparaginase (ansB) of Delftia acidovorans (Pseudomonas acidovorans).